Reading from the N-terminus, the 722-residue chain is D-galactosyl-beta-1-&gt;4-L-rhamnose phosphorylase (722 aa).

Asp319 acts as the Proton donor in catalysis.

The protein belongs to the glycoside hydrolase 112 family.

It catalyses the reaction beta-D-galactosyl-(1-&gt;4)-L-rhamnose + phosphate = alpha-D-galactose 1-phosphate + L-rhamnopyranose. Functionally, reversibly phosphorolyzes beta-D-galactosyl-(1-&gt;4)-L-rhamnose to form alpha-D-galactose 1-phosphate and L-rhamnose. Does not phosphorolyze galacto-N-biose or lacto-N-biose. In the reverse reaction, has the highest activity toward L-rhamnose, also has activity toward L-mannose, and low activity toward L-lyxose, D-glucose, 2-deoxy-D-glucose and D-galactose. This Lachnoclostridium phytofermentans (strain ATCC 700394 / DSM 18823 / ISDg) (Clostridium phytofermentans) protein is D-galactosyl-beta-1-&gt;4-L-rhamnose phosphorylase.